The chain runs to 393 residues: Stearoyl-[acyl-carrier-protein] 9-desaturase, chloroplastic (393 aa).

The N-terminal 31 residues, 1–31, are a transit peptide targeting the chloroplast; it reads MASMVAFRPEAFLCFSPPKTTRSTRSPRISM. 6 residues coordinate Fe cation: Glu135, Glu173, His176, Glu226, Glu259, and His262.

It belongs to the fatty acid desaturase type 2 family. Homodimer. Fe(2+) serves as cofactor.

It localises to the plastid. Its subcellular location is the chloroplast. It carries out the reaction octadecanoyl-[ACP] + 2 reduced [2Fe-2S]-[ferredoxin] + O2 + 2 H(+) = (9Z)-octadecenoyl-[ACP] + 2 oxidized [2Fe-2S]-[ferredoxin] + 2 H2O. The protein operates within lipid metabolism; fatty acid metabolism. Functionally, converts stearoyl-ACP to oleoyl-ACP by introduction of a cis double bond between carbons 9 and 10 of the acyl chain. The polypeptide is Stearoyl-[acyl-carrier-protein] 9-desaturase, chloroplastic (Elaeis guineensis var. tenera (Oil palm)).